Consider the following 440-residue polypeptide: C4-dicarboxylate transport protein (440 aa).

9 consecutive transmembrane segments (helical) span residues 7–29 (LYKS…GHYY), 49–66 (MVIA…IAGM), 79–101 (ALLY…VNVV), 143–165 (VVGA…FGFA), 186–208 (VMFN…AMAF), 221–243 (LGYL…LGGI), 291–313 (VVGL…YLTM), 328–350 (ITHQ…GVTG), and 355–377 (VLAA…ILGI). Residues 419 to 440 (GGAPLIDTRPTDDLGVAEGPAR) form a disordered region.

It belongs to the dicarboxylate/amino acid:cation symporter (DAACS) (TC 2.A.23) family.

It localises to the cell inner membrane. Its function is as follows. Responsible for the transport of dicarboxylates such as succinate, fumarate, and malate from the periplasm across the membrane. The chain is C4-dicarboxylate transport protein from Pseudomonas putida (strain ATCC 47054 / DSM 6125 / CFBP 8728 / NCIMB 11950 / KT2440).